The following is a 274-amino-acid chain: 2,3,4,5-tetrahydropyridine-2,6-dicarboxylate N-succinyltransferase (274 aa).

Substrate contacts are provided by R104 and D141.

The protein belongs to the transferase hexapeptide repeat family. Homotrimer.

The protein resides in the cytoplasm. It catalyses the reaction (S)-2,3,4,5-tetrahydrodipicolinate + succinyl-CoA + H2O = (S)-2-succinylamino-6-oxoheptanedioate + CoA. It functions in the pathway amino-acid biosynthesis; L-lysine biosynthesis via DAP pathway; LL-2,6-diaminopimelate from (S)-tetrahydrodipicolinate (succinylase route): step 1/3. This is 2,3,4,5-tetrahydropyridine-2,6-dicarboxylate N-succinyltransferase from Wigglesworthia glossinidia brevipalpis.